A 57-amino-acid polypeptide reads, in one-letter code: uncharacterized protein (57 aa).

The segment at 1–57 (MDDTLPKQMTPTDTSPLKEEQAHCNNKTLENQPKNINDNKCTDSQNTDLQNTEPSKV) is disordered. Positions 23 to 57 (HCNNKTLENQPKNINDNKCTDSQNTDLQNTEPSKV) are enriched in polar residues.

This is an uncharacterized protein from Ornithodoros (relapsing fever ticks).